A 276-amino-acid polypeptide reads, in one-letter code: MHKIFSKNNLIFFVFVAFIFVVIVLQFFVSSENATKVNLSQTFEPISWLHLLGTDDYGRDLFTRIIIGARSTLFVTVLTLIAIVVIGVTLGLFAGYKKGWIERLVLRFIDVGLSIPEFIIMIALASFFQPSLWNLVISITVIKWMNYTRLTRSIVNSEMNKPYIKMAQLFHVPTRTILIRHLTPKIIPAIIVLMVVDFGKIILYISSLSFIGLGAQPPTPEWGAMLQQGRDFISSHPIMLIAPASVIAITILIFNLTGDALRDRLLKQRGEYDESH.

The next 5 helical transmembrane spans lie at 10–30 (LIFFVFVAFIFVVIVLQFFVS), 73–93 (LFVTVLTLIAIVVIGVTLGLF), 108–128 (FIDVGLSIPEFIIMIALASFF), 186–206 (IIPAIIVLMVVDFGKIILYIS), and 238–258 (IMLIAPASVIAITILIFNLTG). The ABC transmembrane type-1 domain occupies 69–258 (ARSTLFVTVL…ITILIFNLTG (190 aa)).

The protein belongs to the binding-protein-dependent transport system permease family. OppBC subfamily. The complex is composed of two ATP-binding proteins (NikD and NikE), two transmembrane proteins (NikB and NikC) and a solute-binding protein (NikA).

It is found in the cell membrane. Part of the ABC transporter complex NikABCDE (Opp2) involved in nickel import. Probably responsible for the translocation of the substrate across the membrane. The protein is Nickel import system permease protein NikC of Staphylococcus aureus (strain Mu50 / ATCC 700699).